The sequence spans 495 residues: 3-octaprenyl-4-hydroxybenzoate carboxy-lyase (495 aa).

Residue N172 participates in Mn(2+) binding. Residues 175-177 (IYR), 189-191 (RWL), and 194-195 (RG) contribute to the prenylated FMN site. E238 serves as a coordination point for Mn(2+). D287 functions as the Proton donor in the catalytic mechanism.

It belongs to the UbiD family. In terms of assembly, homohexamer. Prenylated FMN serves as cofactor. Requires Mn(2+) as cofactor.

The protein resides in the cell membrane. It catalyses the reaction a 4-hydroxy-3-(all-trans-polyprenyl)benzoate + H(+) = a 2-(all-trans-polyprenyl)phenol + CO2. It functions in the pathway cofactor biosynthesis; ubiquinone biosynthesis. Its function is as follows. Catalyzes the decarboxylation of 3-octaprenyl-4-hydroxy benzoate to 2-octaprenylphenol, an intermediate step in ubiquinone biosynthesis. In Marinobacter nauticus (strain ATCC 700491 / DSM 11845 / VT8) (Marinobacter aquaeolei), this protein is 3-octaprenyl-4-hydroxybenzoate carboxy-lyase.